We begin with the raw amino-acid sequence, 139 residues long: Galactoside-binding soluble lectin 13 (139 aa).

Residues 6 to 138 (VPYKLPVSLS…DISLTSVCVC (133 aa)) enclose the Galectin domain.

Homodimer; disulfide-linked. In terms of tissue distribution, detected in adult and fetal spleen, fetal kidney, adult urinary bladder and placenta. Placental expression originates predominantly from the syncytiotrophoblast.

Its subcellular location is the cytoplasm. It is found in the nucleus matrix. In terms of biological role, binds beta-galactoside and lactose. Strong inducer of T-cell apoptosis. Has hemagglutinating activity towards chicken erythrocytes. The protein is Galactoside-binding soluble lectin 13 (LGALS13) of Homo sapiens (Human).